The following is a 300-amino-acid chain: Sulfate adenylyltransferase subunit 2 (300 aa).

The segment at 281 to 300 is disordered; the sequence is RAIDRDEAGSMEKKKREGYF.

It belongs to the PAPS reductase family. CysD subfamily. Heterodimer composed of CysD, the smaller subunit, and CysN.

It catalyses the reaction sulfate + ATP + H(+) = adenosine 5'-phosphosulfate + diphosphate. It participates in sulfur metabolism; hydrogen sulfide biosynthesis; sulfite from sulfate: step 1/3. Functionally, with CysN forms the ATP sulfurylase (ATPS) that catalyzes the adenylation of sulfate producing adenosine 5'-phosphosulfate (APS) and diphosphate, the first enzymatic step in sulfur assimilation pathway. APS synthesis involves the formation of a high-energy phosphoric-sulfuric acid anhydride bond driven by GTP hydrolysis by CysN coupled to ATP hydrolysis by CysD. The protein is Sulfate adenylyltransferase subunit 2 of Brucella melitensis biotype 2 (strain ATCC 23457).